The following is a 389-amino-acid chain: Acetate kinase (389 aa).

Position 7 (Asn-7) interacts with Mg(2+). Residue Lys-14 participates in ATP binding. Arg-88 is a binding site for substrate. The active-site Proton donor/acceptor is Asp-145. Residues His-205–Gly-209, Asp-279–Arg-281, and Gly-324–Asn-328 contribute to the ATP site. Residue Glu-375 participates in Mg(2+) binding.

This sequence belongs to the acetokinase family. Homodimer. It depends on Mg(2+) as a cofactor. Requires Mn(2+) as cofactor.

The protein resides in the cytoplasm. It carries out the reaction acetate + ATP = acetyl phosphate + ADP. It participates in metabolic intermediate biosynthesis; acetyl-CoA biosynthesis; acetyl-CoA from acetate: step 1/2. Functionally, catalyzes the formation of acetyl phosphate from acetate and ATP. Can also catalyze the reverse reaction. The protein is Acetate kinase of Sulfurimonas denitrificans (strain ATCC 33889 / DSM 1251) (Thiomicrospira denitrificans (strain ATCC 33889 / DSM 1251)).